The primary structure comprises 292 residues: Phosphatidylserine decarboxylase proenzyme (292 aa).

Active-site charge relay system; for autoendoproteolytic cleavage activity residues include aspartate 89, histidine 146, and serine 252. The active-site Schiff-base intermediate with substrate; via pyruvic acid; for decarboxylase activity is the serine 252. Serine 252 bears the Pyruvic acid (Ser); by autocatalysis mark.

Belongs to the phosphatidylserine decarboxylase family. PSD-B subfamily. Prokaryotic type I sub-subfamily. In terms of assembly, heterodimer of a large membrane-associated beta subunit and a small pyruvoyl-containing alpha subunit. Requires pyruvate as cofactor. In terms of processing, is synthesized initially as an inactive proenzyme. Formation of the active enzyme involves a self-maturation process in which the active site pyruvoyl group is generated from an internal serine residue via an autocatalytic post-translational modification. Two non-identical subunits are generated from the proenzyme in this reaction, and the pyruvate is formed at the N-terminus of the alpha chain, which is derived from the carboxyl end of the proenzyme. The autoendoproteolytic cleavage occurs by a canonical serine protease mechanism, in which the side chain hydroxyl group of the serine supplies its oxygen atom to form the C-terminus of the beta chain, while the remainder of the serine residue undergoes an oxidative deamination to produce ammonia and the pyruvoyl prosthetic group on the alpha chain. During this reaction, the Ser that is part of the protease active site of the proenzyme becomes the pyruvoyl prosthetic group, which constitutes an essential element of the active site of the mature decarboxylase.

The protein resides in the cell membrane. The catalysed reaction is a 1,2-diacyl-sn-glycero-3-phospho-L-serine + H(+) = a 1,2-diacyl-sn-glycero-3-phosphoethanolamine + CO2. It participates in phospholipid metabolism; phosphatidylethanolamine biosynthesis; phosphatidylethanolamine from CDP-diacylglycerol: step 2/2. Catalyzes the formation of phosphatidylethanolamine (PtdEtn) from phosphatidylserine (PtdSer). This chain is Phosphatidylserine decarboxylase proenzyme, found in Shewanella baltica (strain OS185).